Reading from the N-terminus, the 333-residue chain is Atrochrysone carboxyl ACP thioesterase MYCFIDRAFT_190111 (333 aa).

4 residues coordinate Zn(2+): H108, H110, D112, and H113. Catalysis depends on D112, which acts as the Proton donor/acceptor.

This sequence belongs to the metallo-beta-lactamase superfamily. Zn(2+) serves as cofactor.

It catalyses the reaction atrochrysone carboxyl-[ACP] + H2O = atrochrysone carboxylate + holo-[ACP] + H(+). The protein operates within secondary metabolite biosynthesis. Functionally, atrochrysone carboxyl ACP thioesterase; part of the gene cluster that mediates the biosynthesis of an emodin derivative that may be involved in black Sigatoka disease of banana. The pathway begins with the synthesis of atrochrysone thioester by the polyketide synthase PKS8-1. The atrochrysone carboxyl ACP thioesterase MYCFIDRAFT_190111 then breaks the thioester bond and releases the atrochrysone carboxylic acid from PKS8-1. The decarboxylase MYCFIDRAFT_34057 then catalyzes the concerted decarboxylation-elimination required to convert atochrysone carboxylic acid into emodin anthrone, which is further oxidized to emodin by the anthrone oxygenase MYCFIDRAFT_34418. The functions of the other tailoring enzymes as well as the final product of the cluster have still to be identified. The chain is Atrochrysone carboxyl ACP thioesterase MYCFIDRAFT_190111 from Pseudocercospora fijiensis (strain CIRAD86) (Black leaf streak disease fungus).